The following is a 59-amino-acid chain: MLVEEVLLLLVAIALISAFALTVTGVVQNAVSQILGFRNATNNVINGLVDAVKQLIGLS.

The chain crosses the membrane as a helical span at residues 7–27 (LLLLVAIALISAFALTVTGVV).

It localises to the membrane. This is an uncharacterized protein from Pyrobaculum aerophilum (strain ATCC 51768 / DSM 7523 / JCM 9630 / CIP 104966 / NBRC 100827 / IM2).